The following is a 95-amino-acid chain: Co-chaperonin GroES (95 aa).

Belongs to the GroES chaperonin family. Heptamer of 7 subunits arranged in a ring. Interacts with the chaperonin GroEL.

It is found in the cytoplasm. Together with the chaperonin GroEL, plays an essential role in assisting protein folding. The GroEL-GroES system forms a nano-cage that allows encapsulation of the non-native substrate proteins and provides a physical environment optimized to promote and accelerate protein folding. GroES binds to the apical surface of the GroEL ring, thereby capping the opening of the GroEL channel. The protein is Co-chaperonin GroES of Rickettsia felis (strain ATCC VR-1525 / URRWXCal2) (Rickettsia azadi).